A 772-amino-acid polypeptide reads, in one-letter code: Acylamino-acid-releasing enzyme 2 (772 aa).

Active-site charge relay system residues include S617, D708, and H740.

The protein belongs to the peptidase S9C family. As to quaternary structure, homotetramer.

It is found in the cytoplasm. The enzyme catalyses Cleavage of an N-acetyl or N-formyl amino acid from the N-terminus of a polypeptide.. Catalyzes the hydrolysis of the N-terminal peptide bond of an N-acetylated peptide to generate an N-acetylated amino acid and a peptide with a free N-terminus. This chain is Acylamino-acid-releasing enzyme 2, found in Oryza sativa subsp. japonica (Rice).